The primary structure comprises 447 residues: ATP-dependent protease ATPase subunit HslU (447 aa).

Residues I17, 59 to 64 (GVGKTE), D256, E321, and R393 each bind ATP.

It belongs to the ClpX chaperone family. HslU subfamily. In terms of assembly, a double ring-shaped homohexamer of HslV is capped on each side by a ring-shaped HslU homohexamer. The assembly of the HslU/HslV complex is dependent on binding of ATP.

It is found in the cytoplasm. Its function is as follows. ATPase subunit of a proteasome-like degradation complex; this subunit has chaperone activity. The binding of ATP and its subsequent hydrolysis by HslU are essential for unfolding of protein substrates subsequently hydrolyzed by HslV. HslU recognizes the N-terminal part of its protein substrates and unfolds these before they are guided to HslV for hydrolysis. The protein is ATP-dependent protease ATPase subunit HslU of Pseudomonas putida (strain GB-1).